We begin with the raw amino-acid sequence, 172 residues long: SsrA-binding protein (172 aa).

This sequence belongs to the SmpB family.

The protein resides in the cytoplasm. Functionally, required for rescue of stalled ribosomes mediated by trans-translation. Binds to transfer-messenger RNA (tmRNA), required for stable association of tmRNA with ribosomes. tmRNA and SmpB together mimic tRNA shape, replacing the anticodon stem-loop with SmpB. tmRNA is encoded by the ssrA gene; the 2 termini fold to resemble tRNA(Ala) and it encodes a 'tag peptide', a short internal open reading frame. During trans-translation Ala-aminoacylated tmRNA acts like a tRNA, entering the A-site of stalled ribosomes, displacing the stalled mRNA. The ribosome then switches to translate the ORF on the tmRNA; the nascent peptide is terminated with the 'tag peptide' encoded by the tmRNA and targeted for degradation. The ribosome is freed to recommence translation, which seems to be the essential function of trans-translation. The protein is SsrA-binding protein of Dehalococcoides mccartyi (strain CBDB1).